The following is a 332-amino-acid chain: UDP-N-acetylenolpyruvoylglucosamine reductase (332 aa).

The FAD-binding PCMH-type domain maps to 45–243; that stretch reads RAGGHAAYFY…LGTRIKTQPL (199 aa). The active site involves Arg-194. Residue Ser-250 is the Proton donor of the active site. Glu-320 is an active-site residue.

The protein belongs to the MurB family. The cofactor is FAD.

The protein resides in the cytoplasm. It catalyses the reaction UDP-N-acetyl-alpha-D-muramate + NADP(+) = UDP-N-acetyl-3-O-(1-carboxyvinyl)-alpha-D-glucosamine + NADPH + H(+). It functions in the pathway cell wall biogenesis; peptidoglycan biosynthesis. Its function is as follows. Cell wall formation. The sequence is that of UDP-N-acetylenolpyruvoylglucosamine reductase from Nitrosomonas eutropha (strain DSM 101675 / C91 / Nm57).